We begin with the raw amino-acid sequence, 300 residues long: Phospholipase A1 (300 aa).

The cysteines at positions 4 and 87 are disulfide-linked. The active-site Nucleophile is the serine 137. Aspartate 165 (charge relay system) is an active-site residue. Disulfide bonds link cysteine 176–cysteine 181 and cysteine 218–cysteine 227. Residue histidine 229 is the Charge relay system of the active site. 3 disulfide bridges follow: cysteine 244/cysteine 268, cysteine 245/cysteine 293, and cysteine 261/cysteine 266.

It belongs to the AB hydrolase superfamily. Lipase family. In terms of tissue distribution, expressed by the venom gland.

The protein resides in the secreted. The enzyme catalyses a 1,2-diacyl-sn-glycero-3-phosphocholine + H2O = a 2-acyl-sn-glycero-3-phosphocholine + a fatty acid + H(+). With respect to regulation, local inflammatory effects are inhibited by antiserotonin drugs (cyproheptadine and methysergide), indomethacin, betamethasone, and antihistamine (chlorpheniramine). Functionally, catalyzes the hydrolysis of phosphatidylcholine with phospholipase A1 activity. Shows potent hemolytic activity that is responsible for its lethal effect. May act as an allergen. In vivo, induces local inflammatory effects. This chain is Phospholipase A1, found in Vespa basalis (Hornet).